We begin with the raw amino-acid sequence, 429 residues long: Adenylosuccinate synthetase (429 aa).

Residues 12–18 (GDEGKGK) and 40–42 (GHT) each bind GTP. Residue Asp13 is the Proton acceptor of the active site. Mg(2+) contacts are provided by Asp13 and Gly40. Residues 13–16 (DEGK), 38–41 (NAGH), Thr128, Arg142, Gln223, Thr238, and Arg302 contribute to the IMP site. The Proton donor role is filled by His41. 298–304 (VNTGRKR) lines the substrate pocket. GTP is bound by residues Arg304, 330–332 (KLD), and 412–414 (GVG).

The protein belongs to the adenylosuccinate synthetase family. Homodimer. The cofactor is Mg(2+).

The protein resides in the cytoplasm. It carries out the reaction IMP + L-aspartate + GTP = N(6)-(1,2-dicarboxyethyl)-AMP + GDP + phosphate + 2 H(+). It functions in the pathway purine metabolism; AMP biosynthesis via de novo pathway; AMP from IMP: step 1/2. Its function is as follows. Plays an important role in the de novo pathway of purine nucleotide biosynthesis. Catalyzes the first committed step in the biosynthesis of AMP from IMP. The polypeptide is Adenylosuccinate synthetase (Corynebacterium jeikeium (strain K411)).